A 152-amino-acid chain; its full sequence is 3-dehydroquinate dehydratase (152 aa).

Tyrosine 23 serves as the catalytic Proton acceptor. Substrate-binding residues include asparagine 74, histidine 80, and aspartate 87. Histidine 100 functions as the Proton donor in the catalytic mechanism. Residues 101–102 (LS) and arginine 111 contribute to the substrate site.

The protein belongs to the type-II 3-dehydroquinase family. As to quaternary structure, homododecamer.

It carries out the reaction 3-dehydroquinate = 3-dehydroshikimate + H2O. It participates in metabolic intermediate biosynthesis; chorismate biosynthesis; chorismate from D-erythrose 4-phosphate and phosphoenolpyruvate: step 3/7. Its function is as follows. Catalyzes a trans-dehydration via an enolate intermediate. The protein is 3-dehydroquinate dehydratase of Clostridium botulinum (strain Langeland / NCTC 10281 / Type F).